We begin with the raw amino-acid sequence, 356 residues long: 1-deoxy-D-xylulose 5-phosphate reductoisomerase (356 aa).

The NADPH site is built by T7, G8, S9, I10, G31, N33, and N111. K112 contacts 1-deoxy-D-xylulose 5-phosphate. Position 113 (E113) interacts with NADPH. D131 serves as a coordination point for Mn(2+). S132, E133, S155, and H178 together coordinate 1-deoxy-D-xylulose 5-phosphate. Mn(2+) is bound at residue E133. G184 provides a ligand contact to NADPH. S191, N196, K197, and E200 together coordinate 1-deoxy-D-xylulose 5-phosphate. E200 is a binding site for Mn(2+).

The protein belongs to the DXR family. It depends on Mg(2+) as a cofactor. Mn(2+) serves as cofactor.

It carries out the reaction 2-C-methyl-D-erythritol 4-phosphate + NADP(+) = 1-deoxy-D-xylulose 5-phosphate + NADPH + H(+). It participates in isoprenoid biosynthesis; isopentenyl diphosphate biosynthesis via DXP pathway; isopentenyl diphosphate from 1-deoxy-D-xylulose 5-phosphate: step 1/6. Catalyzes the NADPH-dependent rearrangement and reduction of 1-deoxy-D-xylulose-5-phosphate (DXP) to 2-C-methyl-D-erythritol 4-phosphate (MEP). This Campylobacter jejuni subsp. jejuni serotype O:23/36 (strain 81-176) protein is 1-deoxy-D-xylulose 5-phosphate reductoisomerase.